The following is a 316-amino-acid chain: Large ribosomal subunit protein uL4 (316 aa).

Residues Met-1 to Asp-211 form a large ribosomal subunit protein uL4 region. 2 disordered regions span residues Ala-44 to Gly-76 and Glu-231 to Asp-316. A compositionally biased stretch (basic residues) spans Gly-60–Gly-71. Positions Ala-212–Asp-316 are unknown. Over residues Gln-255–Gln-270 the composition is skewed to low complexity. Composition is skewed to acidic residues over residues Glu-281–Glu-291 and Thr-301–Asp-316.

Belongs to the universal ribosomal protein uL4 family. In terms of assembly, part of the 50S ribosomal subunit.

In terms of biological role, one of the primary rRNA binding proteins, this protein initially binds near the 5'-end of the 23S rRNA. It is important during the early stages of 50S assembly. It makes multiple contacts with different domains of the 23S rRNA in the assembled 50S subunit and ribosome. Functionally, forms part of the polypeptide exit tunnel. In Synechococcus sp. (strain JA-2-3B'a(2-13)) (Cyanobacteria bacterium Yellowstone B-Prime), this protein is Large ribosomal subunit protein uL4.